The following is an 883-amino-acid chain: Alanine--tRNA ligase (883 aa).

The Zn(2+) site is built by His562, His566, Cys664, and His668.

Belongs to the class-II aminoacyl-tRNA synthetase family. Homotetramer. Requires Zn(2+) as cofactor.

The protein resides in the cytoplasm. The catalysed reaction is tRNA(Ala) + L-alanine + ATP = L-alanyl-tRNA(Ala) + AMP + diphosphate. Its function is as follows. Catalyzes the attachment of alanine to tRNA(Ala) in a two-step reaction: alanine is first activated by ATP to form Ala-AMP and then transferred to the acceptor end of tRNA(Ala). Also edits incorrectly charged Ser-tRNA(Ala) and Gly-tRNA(Ala) via its editing domain. The chain is Alanine--tRNA ligase from Buchnera aphidicola subsp. Schizaphis graminum (strain Sg).